A 401-amino-acid chain; its full sequence is Dual-specificity RNA methyltransferase RlmN (401 aa).

The active-site Proton acceptor is the Glu114. One can recognise a Radical SAM core domain in the interval 120 to 365 (DKGRGTLCVS…TMVRRTRGDD (246 aa)). Cys127 and Cys370 are joined by a disulfide. Residues Cys134, Cys138, and Cys141 each coordinate [4Fe-4S] cluster. Residues 187-188 (GE), Ser219, 241-243 (SLH), and Asn327 each bind S-adenosyl-L-methionine. Cys370 functions as the S-methylcysteine intermediate in the catalytic mechanism.

This sequence belongs to the radical SAM superfamily. RlmN family. [4Fe-4S] cluster serves as cofactor.

It localises to the cytoplasm. It catalyses the reaction adenosine(2503) in 23S rRNA + 2 reduced [2Fe-2S]-[ferredoxin] + 2 S-adenosyl-L-methionine = 2-methyladenosine(2503) in 23S rRNA + 5'-deoxyadenosine + L-methionine + 2 oxidized [2Fe-2S]-[ferredoxin] + S-adenosyl-L-homocysteine. The enzyme catalyses adenosine(37) in tRNA + 2 reduced [2Fe-2S]-[ferredoxin] + 2 S-adenosyl-L-methionine = 2-methyladenosine(37) in tRNA + 5'-deoxyadenosine + L-methionine + 2 oxidized [2Fe-2S]-[ferredoxin] + S-adenosyl-L-homocysteine. Functionally, specifically methylates position 2 of adenine 2503 in 23S rRNA and position 2 of adenine 37 in tRNAs. m2A2503 modification seems to play a crucial role in the proofreading step occurring at the peptidyl transferase center and thus would serve to optimize ribosomal fidelity. This Xanthomonas axonopodis pv. citri (strain 306) protein is Dual-specificity RNA methyltransferase RlmN.